Here is a 530-residue protein sequence, read N- to C-terminus: Lanosterol 14-alpha demethylase CYP51 (530 aa).

Topologically, residues 1-20 (MSATKSIVGEALEYVNIGLS) are lumenal. Residues 21–41 (HFLALPLAQRISLIIIIPFIY) traverse the membrane as a helical segment. Residues 42–530 (NIVWQLLYSL…WEKRNPEQKI (489 aa)) lie on the Cytoplasmic side of the membrane. Lys116 is covalently cross-linked (Glycyl lysine isopeptide (Lys-Gly) (interchain with G-Cter in ubiquitin)). Tyr126 is a binding site for lanosterol. Gly314 contributes to the itraconazole binding site. Glycyl lysine isopeptide (Lys-Gly) (interchain with G-Cter in ubiquitin) cross-links involve residues Lys353 and Lys454. Residue Ser458 is modified to Phosphoserine. Cys470 serves as a coordination point for heme.

The protein belongs to the cytochrome P450 family. In terms of assembly, interacts with ERG28. Heme serves as cofactor.

Its subcellular location is the endoplasmic reticulum membrane. The enzyme catalyses a 14alpha-methyl steroid + 3 reduced [NADPH--hemoprotein reductase] + 3 O2 = a Delta(14) steroid + formate + 3 oxidized [NADPH--hemoprotein reductase] + 4 H2O + 4 H(+). It carries out the reaction a 14alpha-methyl steroid + reduced [NADPH--hemoprotein reductase] + O2 = a 14alpha-hydroxymethyl steroid + oxidized [NADPH--hemoprotein reductase] + H2O + H(+). It catalyses the reaction a 14alpha-hydroxymethyl steroid + reduced [NADPH--hemoprotein reductase] + O2 = a 14alpha-formyl steroid + oxidized [NADPH--hemoprotein reductase] + 2 H2O + H(+). The catalysed reaction is a 14alpha-formyl steroid + reduced [NADPH--hemoprotein reductase] + O2 = a Delta(14) steroid + formate + oxidized [NADPH--hemoprotein reductase] + H2O + 2 H(+). The enzyme catalyses lanosterol + 3 reduced [NADPH--hemoprotein reductase] + 3 O2 = 4,4-dimethyl-5alpha-cholesta-8,14,24-trien-3beta-ol + formate + 3 oxidized [NADPH--hemoprotein reductase] + 4 H2O + 4 H(+). It carries out the reaction lanosterol + reduced [NADPH--hemoprotein reductase] + O2 = 32-hydroxylanosterol + oxidized [NADPH--hemoprotein reductase] + H2O + H(+). It catalyses the reaction 32-hydroxylanosterol + reduced [NADPH--hemoprotein reductase] + O2 = 32-oxolanosterol + oxidized [NADPH--hemoprotein reductase] + 2 H2O + H(+). The catalysed reaction is 32-oxolanosterol + reduced [NADPH--hemoprotein reductase] + O2 = 4,4-dimethyl-5alpha-cholesta-8,14,24-trien-3beta-ol + formate + oxidized [NADPH--hemoprotein reductase] + H2O + 2 H(+). Its pathway is steroid biosynthesis; zymosterol biosynthesis; zymosterol from lanosterol: step 1/6. Its function is as follows. Sterol 14alpha-demethylase that plays a critical role in the third module of ergosterol biosynthesis pathway, being ergosterol the major sterol component in fungal membranes that participates in a variety of functions. The third module or late pathway involves the ergosterol synthesis itself through consecutive reactions that mainly occur in the endoplasmic reticulum (ER) membrane. Starting from lanosterol (lanosta-8,24-dien-3beta-ol), it catalyzes the three-step oxidative removal of the 14alpha-methyl group (C-32) of the sterol in the form of formate, and converts the sterol to 4,4-dimethyl-5alpha-cholesta-8,14,24-trien-3beta-ol, which is critical for ergosterol biosynthesis. Can demethylate substrates not intrinsic to yeast, such as eburicol (24-methylene-24,25-dihydrolanosterol) at a similar rate to lanosterol, and at a lower rate the 24,25-dihydrolanosterol (DHL) to 4,4-dimethyl-8,14-cholestadien-3beta-ol. This is Lanosterol 14-alpha demethylase CYP51 from Saccharomyces cerevisiae (strain ATCC 204508 / S288c) (Baker's yeast).